Reading from the N-terminus, the 360-residue chain is Peptide chain release factor 1 (360 aa).

Gln235 bears the N5-methylglutamine mark.

Belongs to the prokaryotic/mitochondrial release factor family. Post-translationally, methylated by PrmC. Methylation increases the termination efficiency of RF1.

The protein localises to the cytoplasm. Functionally, peptide chain release factor 1 directs the termination of translation in response to the peptide chain termination codons UAG and UAA. This is Peptide chain release factor 1 from Dechloromonas aromatica (strain RCB).